A 411-amino-acid polypeptide reads, in one-letter code: Imidazolonepropionase (411 aa).

2 residues coordinate Fe(3+): His-78 and His-80. 2 residues coordinate Zn(2+): His-78 and His-80. Arg-87, Tyr-150, and His-183 together coordinate 4-imidazolone-5-propanoate. N-formimidoyl-L-glutamate is bound at residue Tyr-150. His-248 is a Fe(3+) binding site. Residue His-248 participates in Zn(2+) binding. Gln-251 lines the 4-imidazolone-5-propanoate pocket. Asp-322 lines the Fe(3+) pocket. Residue Asp-322 participates in Zn(2+) binding. Asn-324 and Gly-326 together coordinate N-formimidoyl-L-glutamate. Ser-327 provides a ligand contact to 4-imidazolone-5-propanoate.

It belongs to the metallo-dependent hydrolases superfamily. HutI family. It depends on Zn(2+) as a cofactor. Requires Fe(3+) as cofactor.

The protein localises to the cytoplasm. The enzyme catalyses 4-imidazolone-5-propanoate + H2O = N-formimidoyl-L-glutamate. It functions in the pathway amino-acid degradation; L-histidine degradation into L-glutamate; N-formimidoyl-L-glutamate from L-histidine: step 3/3. In terms of biological role, catalyzes the hydrolytic cleavage of the carbon-nitrogen bond in imidazolone-5-propanoate to yield N-formimidoyl-L-glutamate. It is the third step in the universal histidine degradation pathway. This chain is Imidazolonepropionase, found in Flavobacterium johnsoniae (strain ATCC 17061 / DSM 2064 / JCM 8514 / BCRC 14874 / CCUG 350202 / NBRC 14942 / NCIMB 11054 / UW101) (Cytophaga johnsonae).